Here is a 392-residue protein sequence, read N- to C-terminus: Phosphoglycerate kinase (392 aa).

Substrate contacts are provided by residues 21-23 (DFN), Arg36, 59-62 (HLGR), Arg113, and Arg146. ATP contacts are provided by residues Lys197, Glu319, and 345 to 348 (GGDT).

The protein belongs to the phosphoglycerate kinase family. As to quaternary structure, monomer.

Its subcellular location is the cytoplasm. The catalysed reaction is (2R)-3-phosphoglycerate + ATP = (2R)-3-phospho-glyceroyl phosphate + ADP. The protein operates within carbohydrate degradation; glycolysis; pyruvate from D-glyceraldehyde 3-phosphate: step 2/5. This is Phosphoglycerate kinase from Francisella philomiragia subsp. philomiragia (strain ATCC 25017 / CCUG 19701 / FSC 153 / O#319-036).